A 257-amino-acid polypeptide reads, in one-letter code: Diphthine synthase (257 aa).

Residues Leu-9, Asp-86, Val-89, 114 to 115 (SI), Leu-166, Ala-207, and His-232 contribute to the S-adenosyl-L-methionine site.

It belongs to the diphthine synthase family. In terms of assembly, homodimer.

It carries out the reaction 2-[(3S)-amino-3-carboxypropyl]-L-histidyl-[translation elongation factor 2] + 3 S-adenosyl-L-methionine = diphthine-[translation elongation factor 2] + 3 S-adenosyl-L-homocysteine + 3 H(+). It participates in protein modification; peptidyl-diphthamide biosynthesis. In terms of biological role, S-adenosyl-L-methionine-dependent methyltransferase that catalyzes the trimethylation of the amino group of the modified target histidine residue in translation elongation factor 2 (EF-2), to form an intermediate called diphthine. The three successive methylation reactions represent the second step of diphthamide biosynthesis. The chain is Diphthine synthase from Methanocella arvoryzae (strain DSM 22066 / NBRC 105507 / MRE50).